The primary structure comprises 544 residues: Chaperonin GroEL (544 aa).

Residues 29–32 (TLGP), 86–90 (DGTTT), G413, 477–479 (DVL), and D493 each bind ATP.

Belongs to the chaperonin (HSP60) family. In terms of assembly, forms a cylinder of 14 subunits composed of two heptameric rings stacked back-to-back. Interacts with the co-chaperonin GroES.

The protein localises to the cytoplasm. It carries out the reaction ATP + H2O + a folded polypeptide = ADP + phosphate + an unfolded polypeptide.. Functionally, together with its co-chaperonin GroES, plays an essential role in assisting protein folding. The GroEL-GroES system forms a nano-cage that allows encapsulation of the non-native substrate proteins and provides a physical environment optimized to promote and accelerate protein folding. This is Chaperonin GroEL from Clostridium kluyveri (strain NBRC 12016).